Reading from the N-terminus, the 29-residue chain is Cyclotide vibi-C (29 aa).

Residues 1-29 constitute a cross-link (cyclopeptide (Gly-Asn)); the sequence is GLPVCGETCAFGSCYTPGCSCSWPVCTRN. 3 disulfides stabilise this stretch: Cys5-Cys19, Cys9-Cys21, and Cys14-Cys26.

This is a cyclic peptide.

Functionally, probably participates in a plant defense mechanism. This Viola biflora (Yellow wood violet) protein is Cyclotide vibi-C.